The chain runs to 20 residues: L-amino-acid oxidase L1 (20 aa).

Belongs to the flavin monoamine oxidase family. FIG1 subfamily. In terms of assembly, monomer. This is in contrast with most of its orthologs, that are non-covalently linked homodimers. Requires FAD as cofactor. In terms of processing, N-glycosylated. As to expression, expressed by the venom gland.

The protein localises to the secreted. The enzyme catalyses an L-alpha-amino acid + O2 + H2O = a 2-oxocarboxylate + H2O2 + NH4(+). The catalysed reaction is L-leucine + O2 + H2O = 4-methyl-2-oxopentanoate + H2O2 + NH4(+). It carries out the reaction L-phenylalanine + O2 + H2O = 3-phenylpyruvate + H2O2 + NH4(+). It catalyses the reaction L-tryptophan + O2 + H2O = indole-3-pyruvate + H2O2 + NH4(+). The enzyme catalyses L-methionine + O2 + H2O = 4-methylsulfanyl-2-oxobutanoate + H2O2 + NH4(+). The catalysed reaction is L-isoleucine + O2 + H2O = (S)-3-methyl-2-oxopentanoate + H2O2 + NH4(+). It carries out the reaction L-tyrosine + O2 + H2O = 3-(4-hydroxyphenyl)pyruvate + H2O2 + NH4(+). Its function is as follows. Catalyzes an oxidative deamination of predominantly hydrophobic and aromatic L-amino acids, thus producing hydrogen peroxide that may contribute to the diverse toxic effects of this enzyme. Is active on L-Met, L-Ile, L-Leu, L-Phe, L-Trp, and L-Tyr. Exhibits diverse biological activities, such as hemorrhage, hemolysis, edema, apoptosis of vascular endothelial cells or tumor cell lines, antibacterial and antiparasitic activities, as well as regulation of platelet aggregation. Its effect on platelets is controversial, since it either induces aggregation or inhibits agonist-induced aggregation. These different effects are probably due to different experimental conditions. The polypeptide is L-amino-acid oxidase L1 (Daboia russelii (Russel's viper)).